The following is a 227-amino-acid chain: Small ribosomal subunit protein uS3 (227 aa).

The region spanning Ile-39 to Lys-108 is the KH type-2 domain.

It belongs to the universal ribosomal protein uS3 family. As to quaternary structure, part of the 30S ribosomal subunit. Forms a tight complex with proteins S10 and S14.

Its function is as follows. Binds the lower part of the 30S subunit head. Binds mRNA in the 70S ribosome, positioning it for translation. The chain is Small ribosomal subunit protein uS3 from Persephonella marina (strain DSM 14350 / EX-H1).